Here is a 326-residue protein sequence, read N- to C-terminus: MVFYTIGPQTPQIDKGQIYGIIGYSGAGKSTLIRLLNGLEKPGSGSVTIAGQDIAQASVEALRQARLKISMVFQHFNLLWSRTVSENIAFSLQISGTSKSVIQDRVQELIALVGLVGKEQAYPSQLSGGQKQRVGIARALANNPNVLLCDEATSALDPQTTDAILELLLDINRKLWLTIVLITHEMHVVRKICHRVAVMEEGRIVEEGEVLSLFTHPQQPITRQFVKQTSGYISANVPFNPQLVNIDNGKVLKLTFVGQSTQQPVIGELTLKYGLAFNMLHGIMTQTTNGTFGEIWLQVPASQSQLPRILADLHAYEISTEVVTNV.

Positions 1–226 (MVFYTIGPQT…PQQPITRQFV (226 aa)) constitute an ABC transporter domain. 23–30 (GYSGAGKS) contacts ATP.

The protein belongs to the ABC transporter superfamily. Methionine importer (TC 3.A.1.24) family. As to quaternary structure, the complex is composed of two ATP-binding proteins (MetN), two transmembrane proteins (MetI) and a solute-binding protein (MetQ).

It localises to the cell inner membrane. The enzyme catalyses L-methionine(out) + ATP + H2O = L-methionine(in) + ADP + phosphate + H(+). It carries out the reaction D-methionine(out) + ATP + H2O = D-methionine(in) + ADP + phosphate + H(+). Its function is as follows. Part of the ABC transporter complex MetNIQ involved in methionine import. Responsible for energy coupling to the transport system. The protein is Methionine import ATP-binding protein MetN of Erwinia pyrifoliae (strain DSM 12162 / Ep1/96).